The primary structure comprises 185 residues: Ribosome-recycling factor (185 aa).

The protein belongs to the RRF family.

The protein resides in the cytoplasm. In terms of biological role, responsible for the release of ribosomes from messenger RNA at the termination of protein biosynthesis. May increase the efficiency of translation by recycling ribosomes from one round of translation to another. In Campylobacter jejuni subsp. jejuni serotype O:23/36 (strain 81-176), this protein is Ribosome-recycling factor.